A 456-amino-acid polypeptide reads, in one-letter code: Bifunctional protein GlmU (456 aa).

Residues 1–229 are pyrophosphorylase; that stretch reads MYNCAIILAA…FEETMGVNSR (229 aa). UDP-N-acetyl-alpha-D-glucosamine-binding positions include 8–11, Lys-22, Gln-73, and 78–79; these read LAAG and GT. Asp-103 lines the Mg(2+) pocket. Residues Gly-140, Glu-155, Asn-170, and Asn-227 each coordinate UDP-N-acetyl-alpha-D-glucosamine. A Mg(2+)-binding site is contributed by Asn-227. The interval 230 to 250 is linker; it reads VQLAEAEKIMRNRINKIHMEN. The tract at residues 251–456 is N-acetyltransferase; it reads GVTLIDHNNT…SWVYKKGLKK (206 aa). Positions 332 and 350 each coordinate UDP-N-acetyl-alpha-D-glucosamine. The active-site Proton acceptor is the His-362. Residues Tyr-365 and Asn-376 each coordinate UDP-N-acetyl-alpha-D-glucosamine. Acetyl-CoA contacts are provided by residues 385–386, Ala-422, and Arg-439; that span reads NY.

This sequence in the N-terminal section; belongs to the N-acetylglucosamine-1-phosphate uridyltransferase family. In the C-terminal section; belongs to the transferase hexapeptide repeat family. Homotrimer. It depends on Mg(2+) as a cofactor.

It is found in the cytoplasm. It carries out the reaction alpha-D-glucosamine 1-phosphate + acetyl-CoA = N-acetyl-alpha-D-glucosamine 1-phosphate + CoA + H(+). It catalyses the reaction N-acetyl-alpha-D-glucosamine 1-phosphate + UTP + H(+) = UDP-N-acetyl-alpha-D-glucosamine + diphosphate. The protein operates within nucleotide-sugar biosynthesis; UDP-N-acetyl-alpha-D-glucosamine biosynthesis; N-acetyl-alpha-D-glucosamine 1-phosphate from alpha-D-glucosamine 6-phosphate (route II): step 2/2. Its pathway is nucleotide-sugar biosynthesis; UDP-N-acetyl-alpha-D-glucosamine biosynthesis; UDP-N-acetyl-alpha-D-glucosamine from N-acetyl-alpha-D-glucosamine 1-phosphate: step 1/1. It participates in bacterial outer membrane biogenesis; LPS lipid A biosynthesis. Its function is as follows. Catalyzes the last two sequential reactions in the de novo biosynthetic pathway for UDP-N-acetylglucosamine (UDP-GlcNAc). The C-terminal domain catalyzes the transfer of acetyl group from acetyl coenzyme A to glucosamine-1-phosphate (GlcN-1-P) to produce N-acetylglucosamine-1-phosphate (GlcNAc-1-P), which is converted into UDP-GlcNAc by the transfer of uridine 5-monophosphate (from uridine 5-triphosphate), a reaction catalyzed by the N-terminal domain. In Clostridium kluyveri (strain NBRC 12016), this protein is Bifunctional protein GlmU.